The primary structure comprises 299 residues: MSDLPDTDFTQRFIFDERDVRGEWVSLDDSYAAVLARHEYPQPVQVLLGELMAATALLVGAMKFDGLLILQARSAGPIPLLMVECSSEREIRGMARYEADQIPAGATLSQLMPDGHLTLTIDPVKGQRYQGTVDLDGANLSECFTNYFVQSQQLNTRFWLNAQGGKARGLLLQQLPRDRQPDDEEREDSWQHVVALAKTLKPEEWTEGNETLLHRLYHEDAVRLFDIQPLRFNCSCSRERSGNALVSLGEHDAKALVDECGGTVEIDCQFCNERYFFDASDVAQLFAGGGTDVASETRH.

2 cysteine pairs are disulfide-bonded: C234/C236 and C268/C271.

This sequence belongs to the HSP33 family. Post-translationally, under oxidizing conditions two disulfide bonds are formed involving the reactive cysteines. Under reducing conditions zinc is bound to the reactive cysteines and the protein is inactive.

The protein resides in the cytoplasm. Its function is as follows. Redox regulated molecular chaperone. Protects both thermally unfolding and oxidatively damaged proteins from irreversible aggregation. Plays an important role in the bacterial defense system toward oxidative stress. This Pseudomonas putida (strain ATCC 47054 / DSM 6125 / CFBP 8728 / NCIMB 11950 / KT2440) protein is 33 kDa chaperonin.